The following is a 112-amino-acid chain: Putative pterin-4-alpha-carbinolamine dehydratase (112 aa).

This sequence belongs to the pterin-4-alpha-carbinolamine dehydratase family.

It catalyses the reaction (4aS,6R)-4a-hydroxy-L-erythro-5,6,7,8-tetrahydrobiopterin = (6R)-L-erythro-6,7-dihydrobiopterin + H2O. This chain is Putative pterin-4-alpha-carbinolamine dehydratase, found in Shewanella putrefaciens (strain CN-32 / ATCC BAA-453).